Reading from the N-terminus, the 488-residue chain is Zinc metalloproteinase-disintegrin 8 (488 aa).

An N-terminal signal peptide occupies residues 1 to 20 (MIQVLLVTICLAVFPYQGSS). A propeptide spanning residues 21-191 (IILESGNVND…KASQLNLPPE (171 aa)) is cleaved from the precursor. The Peptidase M12B domain occupies 198 to 396 (TYIELVVVAD…STTRCLHNEP (199 aa)). Positions 201 and 285 each coordinate Ca(2+). Residue Asn296 is glycosylated (N-linked (GlcNAc...) asparagine). 3 disulfide bridges follow: Cys309–Cys391, Cys349–Cys373, and Cys351–Cys356. His334 lines the Zn(2+) pocket. Glu335 is an active-site residue. The Zn(2+) site is built by His338 and His344. Ca(2+)-binding residues include Cys391, Asn394, Asn409, Glu413, Glu416, and Asp419. In terms of domain architecture, Disintegrin spans 404 to 488 (PPFCGNYFKE…ADCPRNGLYG (85 aa)). 7 cysteine pairs are disulfide-bonded: Cys407-Cys426, Cys418-Cys436, Cys420-Cys431, Cys430-Cys453, Cys444-Cys450, Cys449-Cys474, and Cys462-Cys481. The short motif at 466-468 (RGD) is the Cell attachment site element.

It belongs to the venom metalloproteinase (M12B) family. P-II subfamily. Zn(2+) is required as a cofactor. In terms of tissue distribution, expressed by the venom gland.

It is found in the secreted. In terms of biological role, inhibits ADP-induced platelet aggregation (probably by binding integrin alpha-IIb/beta-3 (ITGA2B/ITGB3)) and degrades fibrinogen. The sequence is that of Zinc metalloproteinase-disintegrin 8 from Crotalus adamanteus (Eastern diamondback rattlesnake).